We begin with the raw amino-acid sequence, 747 residues long: Zinc finger and BTB domain-containing protein 47 (747 aa).

One can recognise a BTB domain in the interval 15–83 (CDVDLVLVPQ…IYTSKLLVNA (69 aa)). A Glycyl lysine isopeptide (Lys-Gly) (interchain with G-Cter in SUMO2) cross-link involves residue K190. Residues 243 to 424 (QTLHVSTGPE…ARGPPATDGL (182 aa)) form a disordered region. Positions 267 to 277 (GREDGLQRHSD) are enriched in basic and acidic residues. Residues 278 to 354 (EEEEDDEEEE…SEEEEGEEGE (77 aa)) are compositionally biased toward acidic residues. Over residues 380–398 (RSRENARRRGTPEPEEAGR) the composition is skewed to basic and acidic residues. Residues 436–459 (HPCQKCPRVFNNRWYLEKHMNVTH) form a C2H2-type 1 zinc finger. Residues 463–485 (QICDQCGKRFLLESELLLHRQTD) form a C2H2-type 2; degenerate zinc finger. C2H2-type zinc fingers lie at residues 490–513 (IQCV…KIVH), 520–542 (FSCE…MVAH), 548–570 (FTCE…SLQH), 576–598 (FRCE…MSIH), 604–626 (FMCQ…MKTH), 632–654 (YICE…RRTH), and 660–687 (YPCD…RVSH). The disordered stretch occupies residues 694–747 (VPAAPGLPPTQPQAHALPLLPGLPQTLPPPPHLPPPPPLFPTTASPGGRMNANN). The segment covering 719 to 733 (TLPPPPHLPPPPPLF) has biased composition (pro residues).

This sequence belongs to the krueppel C2H2-type zinc-finger protein family.

Its subcellular location is the nucleus. Its function is as follows. May be involved in transcriptional regulation. This chain is Zinc finger and BTB domain-containing protein 47 (ZBTB47), found in Homo sapiens (Human).